Consider the following 162-residue polypeptide: Transcription elongation factor GreA (162 aa).

A coiled-coil region spans residues Y50–K75.

This sequence belongs to the GreA/GreB family.

Functionally, necessary for efficient RNA polymerase transcription elongation past template-encoded arresting sites. The arresting sites in DNA have the property of trapping a certain fraction of elongating RNA polymerases that pass through, resulting in locked ternary complexes. Cleavage of the nascent transcript by cleavage factors such as GreA or GreB allows the resumption of elongation from the new 3'terminus. GreA releases sequences of 2 to 3 nucleotides. The polypeptide is Transcription elongation factor GreA (Saccharopolyspora erythraea (strain ATCC 11635 / DSM 40517 / JCM 4748 / NBRC 13426 / NCIMB 8594 / NRRL 2338)).